The sequence spans 146 residues: Hemoglobin subunit beta (146 aa).

T1 is modified (blocked amino end (Thr)). A Globin domain is found at 2–146; the sequence is HWTAEERHYI…VAHALTLQYH (145 aa). Residues H63 and H92 each contribute to the heme b site.

Belongs to the globin family. Heterotetramer of two alpha chains and two beta chains. In terms of tissue distribution, red blood cells.

Functionally, involved in oxygen transport from the lung to the various peripheral tissues. The protein is Hemoglobin subunit beta (HBB) of Caretta caretta (Loggerhead sea turtle).